The sequence spans 156 residues: Succinate dehydrogenase assembly factor 2-B, mitochondrial (156 aa).

The transit peptide at 1–24 (MLRQFIVSTVGRRLQLPMMAQSRL) directs the protein to the mitochondrion.

This sequence belongs to the SDHAF2 family. Interacts with the flavoprotein subunit within the SDH catalytic dimer.

Its subcellular location is the mitochondrion matrix. Plays an essential role in the assembly of succinate dehydrogenase (SDH), an enzyme complex (also referred to as respiratory complex II) that is a component of both the tricarboxylic acid (TCA) cycle and the mitochondrial electron transport chain, and which couples the oxidation of succinate to fumarate with the reduction of ubiquinone (coenzyme Q) to ubiquinol. Required for flavinylation (covalent attachment of FAD) of the flavoprotein subunit of the SDH catalytic dimer. The sequence is that of Succinate dehydrogenase assembly factor 2-B, mitochondrial from Drosophila melanogaster (Fruit fly).